A 345-amino-acid chain; its full sequence is Dihydroorotase (345 aa).

Zn(2+) is bound by residues H13 and H15. Residues 15-17 (HFR) and N41 each bind substrate. Zn(2+)-binding residues include K98, H135, and H173. The residue at position 98 (K98) is an N6-carboxylysine. A substrate-binding site is contributed by H135. L218 contributes to the substrate binding site. D246 is a Zn(2+) binding site. The active site involves D246. The substrate site is built by H250 and A262.

This sequence belongs to the metallo-dependent hydrolases superfamily. DHOase family. Class II DHOase subfamily. As to quaternary structure, homodimer. The cofactor is Zn(2+).

It catalyses the reaction (S)-dihydroorotate + H2O = N-carbamoyl-L-aspartate + H(+). It functions in the pathway pyrimidine metabolism; UMP biosynthesis via de novo pathway; (S)-dihydroorotate from bicarbonate: step 3/3. Its function is as follows. Catalyzes the reversible cyclization of carbamoyl aspartate to dihydroorotate. This Shewanella frigidimarina (strain NCIMB 400) protein is Dihydroorotase.